Consider the following 313-residue polypeptide: Hsp90 co-chaperone Cdc37-like 1 (313 aa).

The protein belongs to the CDC37 family. Forms complexes with Hsp70 and Hsp90.

Its subcellular location is the cytoplasm. Co-chaperone that binds to numerous proteins and promotes their interaction with Hsp70 and Hsp90. In Danio rerio (Zebrafish), this protein is Hsp90 co-chaperone Cdc37-like 1 (cdc37l1).